A 440-amino-acid polypeptide reads, in one-letter code: Diels-Alderase mycB (440 aa).

The signal sequence occupies residues 1–18; sequence MGYLVKLACGLLLPLATA. Residues Asn-80, Asn-155, and Asn-332 are each glycosylated (N-linked (GlcNAc...) asparagine).

It belongs to the Diels-Alderase family.

It catalyses the reaction (5S)-5-(2-methylpropyl)-3-[(2E,6R,8E,10E,12E)-6,8,10,12-tetramethyltetradeca-2,8,10,12-tetraenoyl]-2,5-dihydro-1H-pyrrol-2-one = (5S)-3-[(1S,2R,4aR,6R,8aS)-2-(but-2-en-2-yl)-3,4a,6-trimethyl-1,2,4a,5,6,7,8,8a-octahydronaphthalene-1-carbonyl]-5-(2-methylpropyl)-2,5-dihydro-1H-pyrrol-2-one. The enzyme catalyses (5Z)-5-(2-methylpropylidene)-3-[(2E,6R,8E,10E,12E)-6,8,10,12-tetramethyltetradeca-2,8,10,12-tetraenoyl]-2,5-dihydro-1H-pyrrol-2-one = myceliothermophin E. The protein operates within mycotoxin biosynthesis. Diels-Alderase; part of the gene cluster that mediates the biosynthesis of myceliothermophins, mycotoxins that contain a trans-fused decalin ring system connected to a conjugated 3-pyrrolin-2-one moiety and that have potential anti-tumor properties. The polyketide synthase module (PKS) of the PKS-NRPS mycA is responsible for the synthesis of the octaketide backbone. The downstream nonribosomal peptide synthetase (NRPS) module then amidates the carboxyl end of the octaketide with a leucine. A reductase-like domain (R) at the C-terminus catalyzes the reductive release of the polyketide-amino acid intermediate. Because mycA lacks a designated enoylreductase (ER) domain, the required activity is provided the enoyl reductase mycC. Following mycA-catalyzed construction and release of aminoacyl polyketide aldehyde, Knoevenagel condensation yields the expected ketone. This C18 keto acyclic precursor is the substrate of the Diels-Alderase mycB, that catalyzes the Diels-Alder cycloaddition to produce myceliothermophin E. A yet unknown oxygenase involved in the production of myceliothermophin A, via substitution with a hydroxyl group at the C21, has still to be identified. The sequence is that of Diels-Alderase mycB from Thermothelomyces thermophilus (strain ATCC 42464 / BCRC 31852 / DSM 1799) (Sporotrichum thermophile).